The chain runs to 321 residues: Annexin D3 (321 aa).

N-acetylalanine is present on Ala-2. 4 Annexin repeats span residues 11–82 (PSPA…SWTY), 83–159 (DPAE…TLAS), 171–243 (EVAT…VAIF), and 247–318 (TPEK…TLLG). Ca(2+) is bound by residues Gly-26, Gly-28, and Glu-68. Phosphothreonine is present on Thr-117. Positions 260 and 264 each coordinate Ca(2+). The residue at position 289 (Tyr-289) is a Phosphotyrosine. Residue Asp-304 coordinates Ca(2+).

It belongs to the annexin (TC 1.A.31.1) family. Expressed mainly in roots and flowers. Lower in stems and leaves.

This is Annexin D3 (ANN3) from Arabidopsis thaliana (Mouse-ear cress).